Here is a 485-residue protein sequence, read N- to C-terminus: NADH-quinone oxidoreductase subunit N (485 aa).

The next 14 membrane-spanning stretches (helical) occupy residues 8–28 (LIALLPLLIVGLTVVVVMLSI), 35–55 (FLNATLSVLGLNAALVSLWFV), 75–95 (LYTGLVLLASLATCTFAYPWL), 105–125 (FYLLVLIAALGGILLAGANHL), 127–147 (ALFLGIELISLPLFGLVGYAF), 159–179 (YTILSAAASSFLLFGMALVYA), 203–223 (LLAGLGLMIVGLGFKLSLVPF), 235–255 (PAPVSTFLATASKIAIFGVVM), 271–291 (VVLGLIAFASIIFGNLMALSQ), 297–317 (LLGYSSISHLGYLLVALIALQ), 326–346 (VGVYLAGYLFSSLGAFGVVSL), 374–394 (AVMTVMMLSLAGIPMTLGFIG), 408–430 (WWLVAAVVVGSAIGLYYYLRVAV), and 455–475 (IVVLISALLVLVLGIWPQPLI).

This sequence belongs to the complex I subunit 2 family. As to quaternary structure, NDH-1 is composed of 13 different subunits. Subunits NuoA, H, J, K, L, M, N constitute the membrane sector of the complex.

It is found in the cell inner membrane. The catalysed reaction is a quinone + NADH + 5 H(+)(in) = a quinol + NAD(+) + 4 H(+)(out). Its function is as follows. NDH-1 shuttles electrons from NADH, via FMN and iron-sulfur (Fe-S) centers, to quinones in the respiratory chain. The immediate electron acceptor for the enzyme in this species is believed to be ubiquinone. Couples the redox reaction to proton translocation (for every two electrons transferred, four hydrogen ions are translocated across the cytoplasmic membrane), and thus conserves the redox energy in a proton gradient. The sequence is that of NADH-quinone oxidoreductase subunit N from Klebsiella pneumoniae subsp. pneumoniae (strain ATCC 700721 / MGH 78578).